A 485-amino-acid polypeptide reads, in one-letter code: Glutamyl-tRNA(Gln) amidotransferase subunit A (485 aa).

Residues Lys-79 and Ser-154 each act as charge relay system in the active site. Ser-178 acts as the Acyl-ester intermediate in catalysis.

It belongs to the amidase family. GatA subfamily. Heterotrimer of A, B and C subunits.

It carries out the reaction L-glutamyl-tRNA(Gln) + L-glutamine + ATP + H2O = L-glutaminyl-tRNA(Gln) + L-glutamate + ADP + phosphate + H(+). Functionally, allows the formation of correctly charged Gln-tRNA(Gln) through the transamidation of misacylated Glu-tRNA(Gln) in organisms which lack glutaminyl-tRNA synthetase. The reaction takes place in the presence of glutamine and ATP through an activated gamma-phospho-Glu-tRNA(Gln). The polypeptide is Glutamyl-tRNA(Gln) amidotransferase subunit A (Clostridium botulinum (strain Alaska E43 / Type E3)).